The sequence spans 74 residues: Translation initiation factor IF-1 (74 aa).

An S1-like domain is found at 1-72; that stretch reads MSKEDAIEME…NKGRITYRLK (72 aa).

Belongs to the IF-1 family. In terms of assembly, component of the 30S ribosomal translation pre-initiation complex which assembles on the 30S ribosome in the order IF-2 and IF-3, IF-1 and N-formylmethionyl-tRNA(fMet); mRNA recruitment can occur at any time during PIC assembly.

Its subcellular location is the cytoplasm. In terms of biological role, one of the essential components for the initiation of protein synthesis. Stabilizes the binding of IF-2 and IF-3 on the 30S subunit to which N-formylmethionyl-tRNA(fMet) subsequently binds. Helps modulate mRNA selection, yielding the 30S pre-initiation complex (PIC). Upon addition of the 50S ribosomal subunit IF-1, IF-2 and IF-3 are released leaving the mature 70S translation initiation complex. The protein is Translation initiation factor IF-1 of Synechococcus sp. (strain JA-2-3B'a(2-13)) (Cyanobacteria bacterium Yellowstone B-Prime).